A 553-amino-acid polypeptide reads, in one-letter code: COP9 signalosome complex subunit 10 (553 aa).

The span at 21–46 shows a compositional bias: acidic residues; it reads AEMEEDSDEMGVYEEETSQGAEEEVP. The disordered stretch occupies residues 21–47; it reads AEMEEDSDEMGVYEEETSQGAEEEVPL. Positions 298–474 constitute a PCI domain; the sequence is LRTHFSACLQ…DYVYFGDEPR (177 aa).

In terms of assembly, component of a COP9 signalosome-like (CSN) complex.

Its subcellular location is the cytoplasm. It is found in the nucleus. In terms of biological role, component of the COP9 signalosome (CSN) complex that acts as an regulator of the ubiquitin (Ubl) conjugation pathway by mediating the deneddylation of the cullin subunit of SCF-type E3 ubiquitin-protein ligase complexes. The CSN complex is involved in the regulation of the mating pheromone response. This is COP9 signalosome complex subunit 10 (RRI2) from Eremothecium gossypii (strain ATCC 10895 / CBS 109.51 / FGSC 9923 / NRRL Y-1056) (Yeast).